The sequence spans 567 residues: Probable E3 ubiquitin-protein ligase ARI8 (567 aa).

The segment at 1–27 is disordered; sequence MEADDDFYSGTENYSDYADSDEDDADG. Residues 18–27 show a composition bias toward acidic residues; that stretch reads ADSDEDDADG. Residues 124–337 form a TRIAD supradomain region; sequence GELDCGICFE…GGFYACNRYE (214 aa). Positions 128, 131, 145, 147, 150, 153, 173, 178, 217, 222, 239, 241, 246, 249, 254, 259, 286, and 289 each coordinate Zn(2+). The segment at 128–178 adopts an RING-type 1 zinc-finger fold; that stretch reads CGICFETFLSDKLHAAACGHPFCDSCWEGYITTAINDGPGCLTLRCPDPSC. An IBR-type zinc finger spans residues 197 to 259; the sequence is QKYTSYFVRS…AEEAHRPVDC (63 aa). Residues 286–316 form an RING-type 2; atypical zinc finger; it reads CPKCKRPIEKNQGCMHITCTPPCKFEFCWLC. The active site involves Cys299. Zn(2+) is bound by residues Cys304, Cys308, Cys313, Cys316, His323, and Cys333. Positions 514–543 are disordered; it reads DAYDRTSSSKSLGGKTKGSSSKASSSDSSH. Positions 521-542 are enriched in low complexity; sequence SSKSLGGKTKGSSSKASSSDSS. A RanBP2-type zinc finger spans residues 540–567; it reads DSSHWPCEYCTYVNPRSTTICQMCEHGR.

The protein belongs to the RBR family. Ariadne subfamily. It depends on Zn(2+) as a cofactor. Ubiquitous.

The catalysed reaction is [E2 ubiquitin-conjugating enzyme]-S-ubiquitinyl-L-cysteine + [acceptor protein]-L-lysine = [E2 ubiquitin-conjugating enzyme]-L-cysteine + [acceptor protein]-N(6)-ubiquitinyl-L-lysine.. The protein operates within protein modification; protein ubiquitination. In terms of biological role, might act as an E3 ubiquitin-protein ligase, or as part of E3 complex, which accepts ubiquitin from specific E2 ubiquitin-conjugating enzymes and then transfers it to substrates. The protein is Probable E3 ubiquitin-protein ligase ARI8 (ARI8) of Arabidopsis thaliana (Mouse-ear cress).